Reading from the N-terminus, the 1726-residue chain is Protein Shroom2 (1726 aa).

A PDZ domain is found at 79 to 159 (AGGCYSYWRG…ILKMIVKRRN (81 aa)). Disordered regions lie at residues 294–373 (DNTK…RSDS), 425–451 (RTVA…LSPY), 657–676 (FSQL…DYSW), and 697–785 (EGRN…STYR). The segment covering 318–328 (VLQSTSINETS) has biased composition (polar residues). The segment covering 329-338 (KIQRTEDNTE) has biased composition (basic and acidic residues). Residues 657–667 (FSQLDHSEKGS) are compositionally biased toward basic and acidic residues. Polar residues-rich tracts occupy residues 746–755 (SKSTAALTES) and 769–785 (LESM…STYR). The ASD1 domain maps to 788–877 (LQEAQARVLR…SEPEKINEVG (90 aa)). Disordered regions lie at residues 913 to 968 (PKVP…DKVT), 1007 to 1080 (LDAD…QCGA), 1092 to 1120 (KWKP…GTLP), 1166 to 1240 (FKKR…KNPS), 1269 to 1299 (SSKS…DKPP), and 1471 to 1499 (AQQR…VPSA). Residues 917-926 (PKVVSSSQSE) show a composition bias toward low complexity. The span at 936–948 (DYAKSSEGQESKR) shows a compositional bias: basic and acidic residues. Composition is skewed to polar residues over residues 1054–1070 (NSNS…SPTR) and 1104–1119 (ETSN…SGTL). Over residues 1191 to 1205 (SSSSLATSSESLLTA) the composition is skewed to low complexity. Polar residues predominate over residues 1209–1235 (RAQSYSPSSQDTFPPQSLQKQSPSTYP). The ASD2 domain maps to 1427–1721 (EELVREIVDK…QLKCLTDSLP (295 aa)).

It belongs to the shroom family. In terms of assembly, interacts with F-actin.

It is found in the apical cell membrane. Its subcellular location is the cell junction. It localises to the tight junction. The protein resides in the cytoplasm. The protein localises to the cytoskeleton. Its function is as follows. May be involved in endothelial cell morphology changes during cell spreading. Required for eye pigmentation. In the retinal pigment epithelium, regulates the biogenesis of melanosomes and promotes their association with the apical cell surface by inducing gamma-tubulin redistribution. The polypeptide is Protein Shroom2 (shroom2) (Xenopus tropicalis (Western clawed frog)).